The chain runs to 512 residues: Glucose-1-phosphate adenylyltransferase small subunit 2, chloroplastic (512 aa).

The segment at 1–21 is disordered; it reads MAAIGVLKVPPSSSSSSSSSS. The transit peptide at 1–63 directs the protein to the chloroplast; the sequence is MAAIGVLKVP…RNPFIVSPKA (63 aa). The span at 12 to 21 shows a compositional bias: low complexity; the sequence is SSSSSSSSSS.

The protein belongs to the bacterial/plant glucose-1-phosphate adenylyltransferase family. In terms of assembly, heterotetramer. As to expression, leaves and seeds.

The protein localises to the plastid. It localises to the chloroplast. It carries out the reaction alpha-D-glucose 1-phosphate + ATP + H(+) = ADP-alpha-D-glucose + diphosphate. It participates in glycan biosynthesis; starch biosynthesis. With respect to regulation, activated by 3'phosphoglycerate, inhibited by orthophosphate. Allosteric regulation. Functionally, this protein plays a role in synthesis of starch. It catalyzes the synthesis of the activated glycosyl donor, ADP-glucose from Glc-1-P and ATP. In Vicia faba (Broad bean), this protein is Glucose-1-phosphate adenylyltransferase small subunit 2, chloroplastic (AGPP).